We begin with the raw amino-acid sequence, 532 residues long: Beta-hexosaminidase subunit A1 (532 aa).

Positions 1–18 (MIKKIILFFAVLIAIVIG) are cleaved as a signal peptide. N-linked (GlcNAc...) asparagine glycosylation is found at Asn72 and Asn79. Residue Glu308 is the Proton donor of the active site. Residues Asn350 and Asn427 are each glycosylated (N-linked (GlcNAc...) asparagine).

Belongs to the glycosyl hydrolase 20 family. Dimer. In terms of processing, the N-terminus is blocked. N-glycosylated.

It localises to the lysosome. The enzyme catalyses Hydrolysis of terminal non-reducing N-acetyl-D-hexosamine residues in N-acetyl-beta-D-hexosaminides.. In terms of biological role, responsible for the degradation of GM2 gangliosides, and a variety of other molecules containing terminal N-acetyl hexosamines. This enzyme plays a role during the slug stage of development in the maintenance of pseudoplasmodia of normal size. This Dictyostelium discoideum (Social amoeba) protein is Beta-hexosaminidase subunit A1 (hexa1).